The chain runs to 249 residues: Coproheme decarboxylase (249 aa).

Fe-coproporphyrin III contacts are provided by residues Arg131, 145–149 (YPMNK), His172, Gln185, and Ser223. Residue Tyr145 is part of the active site.

The protein belongs to the ChdC family. Type 1 subfamily. Fe-coproporphyrin III is required as a cofactor.

The catalysed reaction is Fe-coproporphyrin III + 2 H2O2 + 2 H(+) = heme b + 2 CO2 + 4 H2O. It catalyses the reaction Fe-coproporphyrin III + H2O2 + H(+) = harderoheme III + CO2 + 2 H2O. The enzyme catalyses harderoheme III + H2O2 + H(+) = heme b + CO2 + 2 H2O. The protein operates within porphyrin-containing compound metabolism; protoheme biosynthesis. Its function is as follows. Involved in coproporphyrin-dependent heme b biosynthesis. Catalyzes the decarboxylation of Fe-coproporphyrin III (coproheme) to heme b (protoheme IX), the last step of the pathway. The reaction occurs in a stepwise manner with a three-propionate intermediate. This Thermus thermophilus (strain ATCC BAA-163 / DSM 7039 / HB27) protein is Coproheme decarboxylase.